The following is a 180-amino-acid chain: Translation initiation factor IF-3 (180 aa).

Belongs to the IF-3 family. Monomer.

The protein localises to the cytoplasm. IF-3 binds to the 30S ribosomal subunit and shifts the equilibrium between 70S ribosomes and their 50S and 30S subunits in favor of the free subunits, thus enhancing the availability of 30S subunits on which protein synthesis initiation begins. The chain is Translation initiation factor IF-3 from Caldanaerobacter subterraneus subsp. tengcongensis (strain DSM 15242 / JCM 11007 / NBRC 100824 / MB4) (Thermoanaerobacter tengcongensis).